We begin with the raw amino-acid sequence, 107 residues long: Small ribosomal subunit protein uS10 (107 aa).

The protein belongs to the universal ribosomal protein uS10 family. Part of the 30S ribosomal subunit.

Its function is as follows. Involved in the binding of tRNA to the ribosomes. This Deinococcus geothermalis (strain DSM 11300 / CIP 105573 / AG-3a) protein is Small ribosomal subunit protein uS10.